The sequence spans 261 residues: MVETYHQPAPRSAATGLPVSMKIFMYLLTVFLITQMIGSALFAVYLHRRLDKIEDERNLHEDFVFMKTIQRCNTGERSLSLLNCEEIKSQFEGFVKDIMLNKEEKKKENSFEMQKGDQNPQIAAHVISEASSKTTSVLQWAEKGYYTMSNNLVTLENGKQLTVKRQGLYYIYAQVTFCSNREASSQAPFIASLCLKPPNRFERILLRAANTHSSAKPCGQQSIHLGGIFELQPGASVFVNVTDPSQVSHGTGFTSFGLLKL.

Residues 1 to 22 are Cytoplasmic-facing; it reads MVETYHQPAPRSAATGLPVSMK. A helical; Signal-anchor for type II membrane protein membrane pass occupies residues 23-43; sequence IFMYLLTVFLITQMIGSALFA. The Extracellular portion of the chain corresponds to 44 to 261; the sequence is VYLHRRLDKI…GFTSFGLLKL (218 aa). Positions 122-261 constitute a THD domain; that stretch reads IAAHVISEAS…GFTSFGLLKL (140 aa). Cys178 and Cys218 are disulfide-bonded. Asn240 carries an N-linked (GlcNAc...) asparagine glycan.

This sequence belongs to the tumor necrosis factor family. In terms of assembly, homotrimer. Interacts with CD28. CD40 ligand, soluble form: Exists as either a monomer or a homotrimer. Forms a ternary complex between CD40 and integrins for CD40-CD40LG signaling. In terms of processing, the soluble form derives from the membrane form by proteolytic processing.

It localises to the cell membrane. It is found in the cell surface. The protein localises to the secreted. Functionally, cytokine that acts as a ligand to CD40/TNFRSF5. Costimulates T-cell proliferation and cytokine production. Its cross-linking on T-cells generates a costimulatory signal which enhances the production of IL4 and IL10 in conjunction with the TCR/CD3 ligation and CD28 costimulation. Induces the activation of NF-kappa-B. Induces the activation of kinases MAPK8 and PAK2 in T-cells. Mediates B-cell proliferation in the absence of co-stimulus as well as IgE production in the presence of IL4. Involved in immunoglobulin class switching. In terms of biological role, acts as a ligand for integrins, specifically ITGA5:ITGB1 and ITGAV:ITGB3; both integrins and the CD40 receptor are required for activation of CD40-CD40LG signaling, which have cell-type dependent effects, such as B-cell activation, NF-kappa-B signaling and anti-apoptotic signaling. This Aotus trivirgatus (Three-striped night monkey) protein is CD40 ligand (CD40LG).